The following is a 458-amino-acid chain: tRNA modification GTPase MnmE (458 aa).

The (6S)-5-formyl-5,6,7,8-tetrahydrofolate site is built by Arg-22, Glu-84, and Arg-123. Residues 220–379 (GIATAIIGRP…LETAIADLFF (160 aa)) form the TrmE-type G domain. Asn-230 is a K(+) binding site. Residues 230–235 (NVGKSS), 249–255 (TDIAGTT), and 274–277 (DTAG) each bind GTP. Ser-234 serves as a coordination point for Mg(2+). K(+)-binding residues include Thr-249, Ile-251, and Thr-254. Mg(2+) is bound at residue Thr-255. Position 458 (Lys-458) interacts with (6S)-5-formyl-5,6,7,8-tetrahydrofolate.

Belongs to the TRAFAC class TrmE-Era-EngA-EngB-Septin-like GTPase superfamily. TrmE GTPase family. Homodimer. Heterotetramer of two MnmE and two MnmG subunits. K(+) serves as cofactor.

The protein localises to the cytoplasm. Its function is as follows. Exhibits a very high intrinsic GTPase hydrolysis rate. Involved in the addition of a carboxymethylaminomethyl (cmnm) group at the wobble position (U34) of certain tRNAs, forming tRNA-cmnm(5)s(2)U34. The polypeptide is tRNA modification GTPase MnmE (Bacillus cereus (strain ATCC 10987 / NRS 248)).